Here is a 165-residue protein sequence, read N- to C-terminus: Lipoprotein signal peptidase (165 aa).

The next 4 helical transmembrane spans lie at 11–31, 41–61, 64–84, and 92–112; these read YWVL…AVLS, VIPS…FSFL, QGGW…AYLV, and FATL…GNVI. Catalysis depends on residues Asp-122 and Asp-140. The chain crosses the membrane as a helical span at residues 132–152; sequence FYPAFNIADSFICVGAVLAVL.

The protein belongs to the peptidase A8 family.

Its subcellular location is the cell inner membrane. The catalysed reaction is Release of signal peptides from bacterial membrane prolipoproteins. Hydrolyzes -Xaa-Yaa-Zaa-|-(S,diacylglyceryl)Cys-, in which Xaa is hydrophobic (preferably Leu), and Yaa (Ala or Ser) and Zaa (Gly or Ala) have small, neutral side chains.. It participates in protein modification; lipoprotein biosynthesis (signal peptide cleavage). In terms of biological role, this protein specifically catalyzes the removal of signal peptides from prolipoproteins. In Neisseria meningitidis serogroup A / serotype 4A (strain DSM 15465 / Z2491), this protein is Lipoprotein signal peptidase.